The sequence spans 282 residues: Acetylglutamate kinase (282 aa).

Substrate-binding positions include 62 to 63, Arg-84, and Asn-178; that span reads GG.

The protein belongs to the acetylglutamate kinase family. ArgB subfamily.

Its subcellular location is the cytoplasm. It catalyses the reaction N-acetyl-L-glutamate + ATP = N-acetyl-L-glutamyl 5-phosphate + ADP. The protein operates within amino-acid biosynthesis; L-arginine biosynthesis; N(2)-acetyl-L-ornithine from L-glutamate: step 2/4. Its function is as follows. Catalyzes the ATP-dependent phosphorylation of N-acetyl-L-glutamate. This is Acetylglutamate kinase from Thermotoga petrophila (strain ATCC BAA-488 / DSM 13995 / JCM 10881 / RKU-1).